Consider the following 345-residue polypeptide: Phosphoribosylformylglycinamidine cyclo-ligase (345 aa).

It belongs to the AIR synthase family.

It is found in the cytoplasm. It carries out the reaction 2-formamido-N(1)-(5-O-phospho-beta-D-ribosyl)acetamidine + ATP = 5-amino-1-(5-phospho-beta-D-ribosyl)imidazole + ADP + phosphate + H(+). Its pathway is purine metabolism; IMP biosynthesis via de novo pathway; 5-amino-1-(5-phospho-D-ribosyl)imidazole from N(2)-formyl-N(1)-(5-phospho-D-ribosyl)glycinamide: step 2/2. The polypeptide is Phosphoribosylformylglycinamidine cyclo-ligase (Shewanella woodyi (strain ATCC 51908 / MS32)).